Here is a 778-residue protein sequence, read N- to C-terminus: Dolichyl-phosphate-mannose--protein mannosyltransferase 4 (778 aa).

Residues 1-28 show a composition bias toward basic and acidic residues; it reads MASKSEKAVKKAQKLSKEPSVELTDTKS. The tract at residues 1–44 is disordered; that stretch reads MASKSEKAVKKAQKLSKEPSVELTDTKSSDNVTPKQKSPNSTEE. The segment covering 29–41 has biased composition (polar residues); that stretch reads SDNVTPKQKSPNS. An N-linked (GlcNAc...) asparagine glycan is attached at asparagine 40. The next 7 membrane-spanning stretches (helical) occupy residues 60–80, 103–123, 145–165, 196–216, 223–243, 248–268, and 288–308; these read LAFV…LNLP, FFDL…KLAG, VTIR…VFLI, ILLD…YVRF, PFSR…SCTI, VGFF…WYLW, and FCLI…HFNI. Asparagine 335 is a glycosylation site (N-linked (GlcNAc...) asparagine). MIR domains follow at residues 336–396, 408–467, and 474–529; these read STIL…ILPA, NVPV…VVMS, and RPLY…FDDI. The next 4 membrane-spanning stretches (helical) occupy residues 608–628, 644–664, 669–689, and 726–746; these read WWII…EILL, FYRS…PFFI, LFLH…GAFI, and VIEL…FTFF.

The protein belongs to the glycosyltransferase 39 family.

Its subcellular location is the endoplasmic reticulum membrane. It carries out the reaction a di-trans,poly-cis-dolichyl beta-D-mannosyl phosphate + L-seryl-[protein] = 3-O-(alpha-D-mannosyl)-L-seryl-[protein] + a di-trans,poly-cis-dolichyl phosphate + H(+). The enzyme catalyses a di-trans,poly-cis-dolichyl beta-D-mannosyl phosphate + L-threonyl-[protein] = 3-O-(alpha-D-mannosyl)-L-threonyl-[protein] + a di-trans,poly-cis-dolichyl phosphate + H(+). It functions in the pathway protein modification; protein glycosylation. Functionally, transfers mannose from Dol-P-mannose to Ser or Thr residues on proteins. Required for normal cell wall and septum formation. This chain is Dolichyl-phosphate-mannose--protein mannosyltransferase 4 (ogm4), found in Schizosaccharomyces pombe (strain 972 / ATCC 24843) (Fission yeast).